The chain runs to 216 residues: ATP phosphoribosyltransferase (216 aa).

It belongs to the ATP phosphoribosyltransferase family. Short subfamily. In terms of assembly, heteromultimer composed of HisG and HisZ subunits.

The protein localises to the cytoplasm. It carries out the reaction 1-(5-phospho-beta-D-ribosyl)-ATP + diphosphate = 5-phospho-alpha-D-ribose 1-diphosphate + ATP. It participates in amino-acid biosynthesis; L-histidine biosynthesis; L-histidine from 5-phospho-alpha-D-ribose 1-diphosphate: step 1/9. Its function is as follows. Catalyzes the condensation of ATP and 5-phosphoribose 1-diphosphate to form N'-(5'-phosphoribosyl)-ATP (PR-ATP). Has a crucial role in the pathway because the rate of histidine biosynthesis seems to be controlled primarily by regulation of HisG enzymatic activity. The protein is ATP phosphoribosyltransferase of Chromohalobacter salexigens (strain ATCC BAA-138 / DSM 3043 / CIP 106854 / NCIMB 13768 / 1H11).